The following is a 134-amino-acid chain: Cytochrome b (134 aa).

3 helical membrane-spanning segments follow: residues 33–53 (FGSL…FLAM), 77–98 (WLLR…YLHV), and 113–133 (WNIG…GYVL). The heme b site is built by H83 and H97.

This sequence belongs to the cytochrome b family. As to quaternary structure, the cytochrome bc1 complex contains 11 subunits: 3 respiratory subunits (MT-CYB, CYC1 and UQCRFS1), 2 core proteins (UQCRC1 and UQCRC2) and 6 low-molecular weight proteins (UQCRH/QCR6, UQCRB/QCR7, UQCRQ/QCR8, UQCR10/QCR9, UQCR11/QCR10 and a cleavage product of UQCRFS1). This cytochrome bc1 complex then forms a dimer. Requires heme b as cofactor.

It is found in the mitochondrion inner membrane. In terms of biological role, component of the ubiquinol-cytochrome c reductase complex (complex III or cytochrome b-c1 complex) that is part of the mitochondrial respiratory chain. The b-c1 complex mediates electron transfer from ubiquinol to cytochrome c. Contributes to the generation of a proton gradient across the mitochondrial membrane that is then used for ATP synthesis. This chain is Cytochrome b (MT-CYB), found in Chiroderma salvini (Salvin's big-eyed bat).